The following is a 192-amino-acid chain: Peptidyl-tRNA hydrolase (192 aa).

Y18 contributes to the tRNA binding site. H23 acts as the Proton acceptor in catalysis. 3 residues coordinate tRNA: F69, N71, and N117.

The protein belongs to the PTH family. Monomer.

The protein resides in the cytoplasm. It carries out the reaction an N-acyl-L-alpha-aminoacyl-tRNA + H2O = an N-acyl-L-amino acid + a tRNA + H(+). In terms of biological role, hydrolyzes ribosome-free peptidyl-tRNAs (with 1 or more amino acids incorporated), which drop off the ribosome during protein synthesis, or as a result of ribosome stalling. Catalyzes the release of premature peptidyl moieties from peptidyl-tRNA molecules trapped in stalled 50S ribosomal subunits, and thus maintains levels of free tRNAs and 50S ribosomes. The protein is Peptidyl-tRNA hydrolase of Neisseria meningitidis serogroup B (strain ATCC BAA-335 / MC58).